Here is a 401-residue protein sequence, read N- to C-terminus: Tryptophan synthase beta chain (401 aa).

K91 is modified (N6-(pyridoxal phosphate)lysine).

It belongs to the TrpB family. In terms of assembly, tetramer of two alpha and two beta chains. Requires pyridoxal 5'-phosphate as cofactor.

It catalyses the reaction (1S,2R)-1-C-(indol-3-yl)glycerol 3-phosphate + L-serine = D-glyceraldehyde 3-phosphate + L-tryptophan + H2O. The protein operates within amino-acid biosynthesis; L-tryptophan biosynthesis; L-tryptophan from chorismate: step 5/5. In terms of biological role, the beta subunit is responsible for the synthesis of L-tryptophan from indole and L-serine. The polypeptide is Tryptophan synthase beta chain (Lactococcus lactis subsp. cremoris (strain MG1363)).